A 100-amino-acid polypeptide reads, in one-letter code: ATP synthase subunit c (100 aa).

The next 2 membrane-spanning stretches (helical) occupy residues 27-47 (SVIA…IGMG) and 72-92 (FIAL…TLIV).

It belongs to the ATPase C chain family. In terms of assembly, F-type ATPases have 2 components, F(1) - the catalytic core - and F(0) - the membrane proton channel. F(1) has five subunits: alpha(3), beta(3), gamma(1), delta(1), epsilon(1). F(0) has three main subunits: a(1), b(2) and c(10-14). The alpha and beta chains form an alternating ring which encloses part of the gamma chain. F(1) is attached to F(0) by a central stalk formed by the gamma and epsilon chains, while a peripheral stalk is formed by the delta and b chains.

It localises to the cell inner membrane. In terms of biological role, f(1)F(0) ATP synthase produces ATP from ADP in the presence of a proton or sodium gradient. F-type ATPases consist of two structural domains, F(1) containing the extramembraneous catalytic core and F(0) containing the membrane proton channel, linked together by a central stalk and a peripheral stalk. During catalysis, ATP synthesis in the catalytic domain of F(1) is coupled via a rotary mechanism of the central stalk subunits to proton translocation. This chain is ATP synthase subunit c, found in Campylobacter curvus (strain 525.92).